Consider the following 312-residue polypeptide: Malate dehydrogenase (312 aa).

Residues G7 to G13 and D34 contribute to the NAD(+) site. Residues R81 and R87 each coordinate substrate. Residues N94 and I117–N119 contribute to the NAD(+) site. Substrate contacts are provided by N119 and R153. Catalysis depends on H177, which acts as the Proton acceptor. An NAD(+)-binding site is contributed by M227.

It belongs to the LDH/MDH superfamily. MDH type 1 family. Homodimer.

The catalysed reaction is (S)-malate + NAD(+) = oxaloacetate + NADH + H(+). Its function is as follows. Catalyzes the reversible oxidation of malate to oxaloacetate. This is Malate dehydrogenase from Salmonella agona (strain SL483).